Reading from the N-terminus, the 1526-residue chain is MELSPLQPVNENMQMNKKKNEDAKKRLSIERIYQKKTQLEHILLRPDTYIGSVELVTQQMWVYDEDVGINYREVTFVPGLYKIFDEILVNAADNKQRDPKMSCIRVTIDPENNLISIWNNGKGIPVVEHKVEKMYVPALIFGQLLTSSNYDDDEKKVTGGRNGYGAKLCNIFSTRFTVETASKEYKKMFKQTWMDNMGRAGDMELKPFNGEDYTCITFQPDLSKFKMQSLDKDIVALMVRRAYDIAGSTKDVKVFLNGNKLPVKGFRSYVDMYLKDKLDETGNALKVVHEQVNPRWEVCLTMSEKGFQQISFVNSIATSKGGRHVDYVADQIVSKLVDVVKKKNKGGVAVKAHQVKNHMWIFVNALIENPTFDSQTKENMTLQAKSFGSTCQLSEKFIKAAIGCGIVESILNWVKFKAQIQLNKKCSAVKHNRIKGIPKLDDANDAGSRNSTECTLILTEGDSAKTLAVSGLGVVGRDKYGVFPLRGKILNVREASHKQIMENAEINNIIKIVGLQYKKNYEDEDSLKTLRYGKIMIMTDQDQDGSHIKGLLINFIHHNWPSLLRHRFLEEFITPIVKVSKNKQELAFYSLPEFEEWKSSTPNHKKWKVKYYKGLGTSTSKEAKEYFADMKRHRIQFKYSGPEDDAAISLAFSKKQVDDRKEWLTHFMEDRRQRKLLGLPEDYLYGQTTTYLTYNDFINKELILFSNSDNERSIPSMVDGLKPGQRKVLFTCFKRNDKREVKVAQLAGSVAEMSSYHHGEMSLMMTIINLAQNFVGSNNLNLLQPIGQFGTRLHGGKDSASPRYIFTMLSPLTRLLFPPKDDHTLKFLYDDNQRVEPEWYIPIIPMVLINGAEGIGTGWSCKIPNFDIREVVNNIRRLLDGEEPLPMLPSYKNFKGTIEELASNQYVINGEVAILNSTTIEISELPIRTWTQTYKEQVLEPMLNGTEKTPPLITDYREYHTDTTVKFVIKMTEEKLAEAERVGLHKVFKLQTSLTCNSMVLFDHVGCLKKYDTVLDILKDFFELRLKYYGLRKEWLLGMLGAESAKLNNQARFILEKIDGKIIIENKPKKELIKVLIQRGYDSDPVKAWKEAQQKVPDEEENEESDNENSDSVAESGPTFNYLLDMPLWYLTKEKKDELCKQRNEKEQELNTLKNKSPSDLWKEDLAVFIEELEVVEAKEKQDEQVGLPGKGGKAKGKKAQMSEVLPSPHGKRVIPQVTMEMKAEAEKKIRKKIKSENVEGTPTENGLELGSLKQRIEKKQKKEPGAMTKKQTTLAFKPIKKGKKRNPWSDSESDMSSNESNVDVPPREKDPRRAATKAKFTMDLDSDEDFSGSDGKDEDEDFFPLDTTPPKTKIPQKNTKKALKPQKSAMSGDPESDEKDSVPASPGPPAADLPADTEQLKPSSKQTVAVKKTATKSQSSTSTAGTKKRAVPKGSKSDSALNAHGPEKPVPAKAKNSRKRKQSSSDDSDSDFEKVVSKVAASKKSKGENQDFRVDLDETMVPRAKSGRAKKPIKYLEESDDDDLF.

At methionine 1 the chain carries N-acetylmethionine. Residues 1–21 (MELSPLQPVNENMQMNKKKNE) form a disordered region. Serine 4 carries the phosphoserine modification. A Glycyl lysine isopeptide (Lys-Gly) (interchain with G-Cter in SUMO2) cross-link involves residue lysine 17. Residues asparagine 90, asparagine 119, and 147–149 (SSN) each bind ATP. Residues lysine 155 and lysine 156 each participate in a glycyl lysine isopeptide (Lys-Gly) (interchain with G-Cter in SUMO2) cross-link. 160–167 (GRNGYGAK) contacts ATP. Lysine 260 is covalently cross-linked (Glycyl lysine isopeptide (Lys-Gly) (interchain with G-Cter in SUMO2)). Threonine 281 is subject to Phosphothreonine. The interaction with DNA stretch occupies residues 341 to 343 (KKK). Lysine 351 is covalently cross-linked (Glycyl lysine isopeptide (Lys-Gly) (interchain with G-Cter in SUMO2)). 375–377 (QTK) contacts ATP. Residues lysine 385, lysine 396, lysine 415, lysine 417, lysine 424, and lysine 439 each participate in a glycyl lysine isopeptide (Lys-Gly) (interchain with G-Cter in SUMO2) cross-link. Residues 454–571 (CTLILTEGDS…SLLRHRFLEE (118 aa)) enclose the Toprim domain. A Mg(2+)-binding site is contributed by glutamate 460. Residues lysine 465, lysine 479, and lysine 528 each participate in a glycyl lysine isopeptide (Lys-Gly) (interchain with G-Cter in SUMO2) cross-link. Positions 540 and 542 each coordinate Mg(2+). Residues lysine 583, lysine 598, lysine 613, lysine 621, lysine 624, lysine 631, lysine 638, lysine 654, lysine 661, and lysine 675 each participate in a glycyl lysine isopeptide (Lys-Gly) (interchain with G-Cter in SUMO2) cross-link. A Topo IIA-type catalytic domain is found at 714–1166 (IPSMVDGLKP…SPSDLWKEDL (453 aa)). The active-site O-(5'-phospho-DNA)-tyrosine intermediate is tyrosine 804. The segment at 989-998 (KLQTSLTCNS) is interaction with DNA. Lysine 1074 is covalently cross-linked (Glycyl lysine isopeptide (Lys-Gly) (interchain with G-Cter in SUMO2)). Disordered stretches follow at residues 1089–1117 (WKEA…AESG) and 1180–1217 (EKQD…VIPQ). Positions 1098 to 1109 (DEEENEESDNEN) are enriched in acidic residues. Phosphoserine; by CK1 is present on serine 1105. Glycyl lysine isopeptide (Lys-Gly) (interchain with G-Cter in SUMO2) cross-links involve residues lysine 1191 and lysine 1199. Phosphoserine is present on serine 1208. Lysine 1223 participates in a covalent cross-link: Glycyl lysine isopeptide (Lys-Gly) (interchain with G-Cter in SUMO2). The interval 1233-1526 (KIKSENVEGT…LEESDDDDLF (294 aa)) is disordered. Lysine 1235 participates in a covalent cross-link: Glycyl lysine isopeptide (Lys-Gly) (interchain with G-Cter in SUMO1); alternate. Lysine 1235 is covalently cross-linked (Glycyl lysine isopeptide (Lys-Gly) (interchain with G-Cter in SUMO2); alternate). Threonine 1242 carries the post-translational modification Phosphothreonine. Lysine 1254 is covalently cross-linked (Glycyl lysine isopeptide (Lys-Gly) (interchain with G-Cter in SUMO2)). Positions 1255–1265 (QRIEKKQKKEP) are enriched in basic and acidic residues. Glycyl lysine isopeptide (Lys-Gly) (interchain with G-Cter in SUMO2) cross-links involve residues lysine 1271, lysine 1278, and lysine 1281. Serine 1290, serine 1292, serine 1294, and serine 1297 each carry phosphoserine. Position 1322 is a phosphothreonine (threonine 1322). Residues 1325–1344 (LDSDEDFSGSDGKDEDEDFF) show a composition bias toward acidic residues. Residues serine 1327 and serine 1332 each carry the phosphoserine modification. Threonine 1349 carries the phosphothreonine modification. Glycyl lysine isopeptide (Lys-Gly) (interchain with G-Cter in SUMO2) cross-links involve residues lysine 1358, lysine 1362, and lysine 1368. 2 positions are modified to phosphoserine: serine 1369 and serine 1372. Lysine 1380 participates in a covalent cross-link: Glycyl lysine isopeptide (Lys-Gly) (interchain with G-Cter in SUMO2). Residues serine 1382 and serine 1386 each carry the phosphoserine modification. A compositionally biased stretch (low complexity) spans 1405–1426 (SKQTVAVKKTATKSQSSTSTAG). Residue lysine 1417 forms a Glycyl lysine isopeptide (Lys-Gly) (interchain with G-Cter in SUMO2); alternate linkage. At lysine 1417 the chain carries N6-acetyllysine; alternate. Residues 1428–1434 (KKRAVPK) form an interaction with PLSCR1 region. Residue lysine 1437 forms a Glycyl lysine isopeptide (Lys-Gly) (interchain with G-Cter in SUMO2); alternate linkage. Lysine 1437 carries the N6-acetyllysine; alternate modification. Glycyl lysine isopeptide (Lys-Gly) (interchain with G-Cter in SUMO2) cross-links involve residues lysine 1449 and lysine 1454. Phosphoserine occurs at positions 1464, 1466, 1469, and 1471. Glycyl lysine isopeptide (Lys-Gly) (interchain with G-Cter in SUMO2) cross-links involve residues lysine 1479 and lysine 1487. Over residues 1486–1497 (SKGENQDFRVDL) the composition is skewed to basic and acidic residues. A Phosphoserine modification is found at serine 1520.

Belongs to the type II topoisomerase family. Homodimer. Interacts with COPS5. Interacts with RECQL5; this stimulates DNA decatenation. Interacts with SETMAR; stimulates the topoisomerase activity. Interacts with DHX9; this interaction occurs in a E2 enzyme UBE2I- and RNA-dependent manner, negatively regulates DHX9-mediated double-stranded DNA and RNA duplex helicase activity and stimulates TOP2A-mediated supercoiled DNA relaxation activity. Interacts with HNRNPU (via C-terminus); this interaction protects the topoisomerase TOP2A from degradation and positively regulates the relaxation of supercoiled DNA in a RNA-dependent manner. Interacts with MCM3AP. Interacts with ERCC6. Interacts with PLSCR1. Interacts with GCNA; this interaction allows the resolution of topoisomerase II (TOP2A) DNA-protein cross-links. Interacts with POL1RA/RPA1 (via dock II) and UBTF in the context of Pol I complex; may assist Pol I transcription initiation by releasing supercoils occurring during DNA unwinding. Interacts with TPRN; TPRN interacts with a number of DNA damage response proteins, is recruited to sites of DNA damage and may play a role in DNA damage repair. Requires Mg(2+) as cofactor. Mn(2+) serves as cofactor. The cofactor is Ca(2+). Post-translationally, phosphorylation has no effect on catalytic activity. However, phosphorylation at Ser-1105 by CSNK1D/CK1 promotes DNA cleavable complex formation.

Its subcellular location is the cytoplasm. The protein resides in the nucleus. The protein localises to the nucleoplasm. It localises to the nucleolus. It carries out the reaction ATP-dependent breakage, passage and rejoining of double-stranded DNA.. Its function is as follows. Key decatenating enzyme that alters DNA topology by binding to two double-stranded DNA molecules, generating a double-stranded break in one of the strands, passing the intact strand through the broken strand, and religating the broken strand. May play a role in regulating the period length of BMAL1 transcriptional oscillation. This is DNA topoisomerase 2-alpha (TOP2A) from Cricetulus griseus (Chinese hamster).